The following is a 208-amino-acid chain: 3-isopropylmalate dehydratase small subunit 2 (208 aa).

Residues 163 to 208 (EGERLDNASTSAGHGHAGTPLGDDPAKEDGPRPEQASGHQKEEHHA) form a disordered region.

Belongs to the LeuD family. LeuD type 2 subfamily. As to quaternary structure, heterodimer of LeuC and LeuD.

It carries out the reaction (2R,3S)-3-isopropylmalate = (2S)-2-isopropylmalate. Its pathway is amino-acid biosynthesis; L-leucine biosynthesis; L-leucine from 3-methyl-2-oxobutanoate: step 2/4. Catalyzes the isomerization between 2-isopropylmalate and 3-isopropylmalate, via the formation of 2-isopropylmaleate. The polypeptide is 3-isopropylmalate dehydratase small subunit 2 (leuD2) (Deinococcus radiodurans (strain ATCC 13939 / DSM 20539 / JCM 16871 / CCUG 27074 / LMG 4051 / NBRC 15346 / NCIMB 9279 / VKM B-1422 / R1)).